Reading from the N-terminus, the 154-residue chain is Myoglobin (154 aa).

One can recognise a Globin domain in the interval 2–148 (GLSDGEWQLV…FRNDMAAKYK (147 aa)). Ser4 bears the Phosphoserine mark. His65 serves as a coordination point for nitrite. An O2-binding site is contributed by His65. Thr68 carries the phosphothreonine modification. A heme b-binding site is contributed by His94.

It belongs to the globin family. As to quaternary structure, monomeric.

The protein localises to the cytoplasm. Its subcellular location is the sarcoplasm. The enzyme catalyses Fe(III)-heme b-[protein] + nitric oxide + H2O = Fe(II)-heme b-[protein] + nitrite + 2 H(+). It catalyses the reaction H2O2 + AH2 = A + 2 H2O. Functionally, monomeric heme protein which primary function is to store oxygen and facilitate its diffusion within muscle tissues. Reversibly binds oxygen through a pentacoordinated heme iron and enables its timely and efficient release as needed during periods of heightened demand. Depending on the oxidative conditions of tissues and cells, and in addition to its ability to bind oxygen, it also has a nitrite reductase activity whereby it regulates the production of bioactive nitric oxide. Under stress conditions, like hypoxia and anoxia, it also protects cells against reactive oxygen species thanks to its pseudoperoxidase activity. This is Myoglobin (MB) from Sus scrofa (Pig).